Reading from the N-terminus, the 172-residue chain is Transcriptional repressor NrdR (172 aa).

The segment at 3 to 34 (CPFCRHPDSRVVDSRTTDDGTSIRRRRQCPDC) is a zinc-finger region. The region spanning 46–136 (LMVIKRSGVT…VYRAFDSLED (91 aa)) is the ATP-cone domain. The tract at residues 152-172 (ERSGGGTCGTGTVPVPAGTAD) is disordered. Residues 161–172 (TGTVPVPAGTAD) show a composition bias toward low complexity.

This sequence belongs to the NrdR family. Requires Zn(2+) as cofactor.

Negatively regulates transcription of bacterial ribonucleotide reductase nrd genes and operons by binding to NrdR-boxes. The protein is Transcriptional repressor NrdR of Streptomyces clavuligerus.